A 328-amino-acid chain; its full sequence is Malate dehydrogenase (328 aa).

Residue 11 to 17 (GAAGQIG) coordinates NAD(+). Substrate contacts are provided by Arg-94 and Arg-100. Residues Asn-107, Gln-114, and 131 to 133 (VGN) contribute to the NAD(+) site. Residues Asn-133 and Arg-164 each coordinate substrate. The Proton acceptor role is filled by His-189.

Belongs to the LDH/MDH superfamily. MDH type 2 family.

It carries out the reaction (S)-malate + NAD(+) = oxaloacetate + NADH + H(+). Catalyzes the reversible oxidation of malate to oxaloacetate. The protein is Malate dehydrogenase of Xylella fastidiosa (strain 9a5c).